Consider the following 141-residue polypeptide: HTH-type transcriptional repressor NsrR (141 aa).

An HTH rrf2-type domain is found at 2–129; that stretch reads QLTSFTDYGL…DNYTLADLVE (128 aa). Positions 28–51 form a DNA-binding region, H-T-H motif; sequence ISEVTDVYGVSRNHMVKIINQLSR. The [2Fe-2S] cluster site is built by cysteine 91, cysteine 96, and cysteine 102.

It depends on [2Fe-2S] cluster as a cofactor.

In terms of biological role, nitric oxide-sensitive repressor of genes involved in protecting the cell against nitrosative stress. May require iron for activity. In Escherichia coli O139:H28 (strain E24377A / ETEC), this protein is HTH-type transcriptional repressor NsrR.